Here is a 492-residue protein sequence, read N- to C-terminus: MDNYQTKNISNLLTSLCFTTLLILAPVVICTRQHRFDSPKRSLLANEQDLVTGLPGQPDVSFRHYAGYVPVDESNGRAMFYWFFEAMDLPKEKPLVLWLNGGPGCSSVGYGATQEIGPFLVDTNGNGLNFNPYAWNKEANMLFLESPVGVGFSYSNTSSDYQKLGDDFTARDAYTFLCNWFEKFPEHKENTFYIAGESYAGKYVPELAEVVYDNNNNNKKNGSSFHINLKGILLGNPETSDAEDWRGWVDYAWSHAVISDETHRIITRTCNFSSDNTWSNDECNEAVAEVLKQYHEIDIYSIYTSVCIGDSARSSYFDSAQFKTNSRISSKRMPPRLMGGYDPCLDDYARVFYNRADVQKSLHASDGVNLKNWSICNMEIFNNWTGSNPSVLPIYEKLIAGGLRIWVYSGDTDGRVPVLATRYSLNALELPIKTAWRPWYHEKQVSGWLQEYEGLTFATFRGAGHAVPCFKPSSSLAFFSAFLSGVPPPPSR.

A signal peptide spans 1 to 30; the sequence is MDNYQTKNISNLLTSLCFTTLLILAPVVIC. 3 disulfide bridges follow: cysteine 105-cysteine 376, cysteine 270-cysteine 283, and cysteine 307-cysteine 344. Asparagine 156 carries an N-linked (GlcNAc...) asparagine glycan. Serine 198 is a catalytic residue. 2 N-linked (GlcNAc...) asparagine glycosylation sites follow: asparagine 221 and asparagine 271. N-linked (GlcNAc...) asparagine glycosylation is found at asparagine 372 and asparagine 383. Active-site residues include aspartate 413 and histidine 465.

This sequence belongs to the peptidase S10 family. In terms of tissue distribution, expressed in roots, senescent leaves, stems, flowers and siliques.

It is found in the secreted. Functionally, probable carboxypeptidase. The polypeptide is Serine carboxypeptidase-like 31 (SCPL31) (Arabidopsis thaliana (Mouse-ear cress)).